We begin with the raw amino-acid sequence, 356 residues long: MATAALLRGATPGRGGPVWRWRLRAAPRCRLAHSSCSPGGDPTAGAAWACFRLDGRTLLRVRGPDAAPFLLGLLTNELPLPSPAAAGAPPAARAGYAHFLNVQGRTLYDVILYGLQEHSEVSGFLLECDSSVQGALQKHLALYRIRRKVTVEPHPELRVWAVLPSSPEACGAASLQERAGAAAILIRDPRTARMGWRLLTQDEGPALVPGGRLGDLWDYHQHRYLQGVPEGVRDLPPGVALPLESNLAFMNGVSFTKGCYIGQELTARTHHMGVIRKRLFPVRFLDPLPTSGITPGATVLTASGQTVGKFRAGQGNVGLALLWSEKIKGPLHIRASEGAQVALAASVPDWWPTVSK.

The N-terminal 39 residues, 1–39, are a transit peptide targeting the mitochondrion; it reads MATAALLRGATPGRGGPVWRWRLRAAPRCRLAHSSCSPG. At K309 the chain carries N6-acetyllysine; alternate. K309 bears the N6-succinyllysine; alternate mark.

It belongs to the GcvT family. CAF17/IBA57 subfamily. Monomer. Heterotetramer; forms a dimer of dimers with ISCA2. Interacts with [2Fe-2S]-ISCA2 forming the heterodimer [2Fe- 2S]-ISCA2-IBA57 complex; [2Fe-2S] cluster binding is absolutely required to promote the complex formation. As to expression, expressed in skin fibroblasts and skeletal muscle (at protein level).

Its subcellular location is the mitochondrion. Mitochondrial protein involved in the maturation of mitochondrial [4Fe-4S]-proteins in the late stage of the iron-sulfur cluster assembly pathway. Operates in cooperation with ISCA2 in the maturation of [4Fe-4S] proteins. Its function is as follows. Involved in the maturation of mitochondrial 2Fe-2S proteins in the late stage of the iron-sulfur cluster assembly pathway. In Homo sapiens (Human), this protein is Iron-sulfur cluster assembly factor IBA57, mitochondrial (IBA57).